A 460-amino-acid polypeptide reads, in one-letter code: Argininosuccinate lyase (460 aa).

Belongs to the lyase 1 family. Argininosuccinate lyase subfamily.

It localises to the cytoplasm. The catalysed reaction is 2-(N(omega)-L-arginino)succinate = fumarate + L-arginine. It functions in the pathway amino-acid biosynthesis; L-arginine biosynthesis; L-arginine from L-ornithine and carbamoyl phosphate: step 3/3. The polypeptide is Argininosuccinate lyase (Actinobacillus succinogenes (strain ATCC 55618 / DSM 22257 / CCUG 43843 / 130Z)).